A 127-amino-acid polypeptide reads, in one-letter code: NADPH-dependent 7-cyano-7-deazaguanine reductase (127 aa).

C40 acts as the Thioimide intermediate in catalysis. D47 functions as the Proton donor in the catalytic mechanism. Substrate contacts are provided by residues 62-64 (VEL) and 81-82 (HE).

This sequence belongs to the GTP cyclohydrolase I family. QueF type 1 subfamily.

It localises to the cytoplasm. It catalyses the reaction 7-aminomethyl-7-carbaguanine + 2 NADP(+) = 7-cyano-7-deazaguanine + 2 NADPH + 3 H(+). It functions in the pathway tRNA modification; tRNA-queuosine biosynthesis. Its function is as follows. Catalyzes the NADPH-dependent reduction of 7-cyano-7-deazaguanine (preQ0) to 7-aminomethyl-7-deazaguanine (preQ1). The polypeptide is NADPH-dependent 7-cyano-7-deazaguanine reductase (Campylobacter jejuni (strain RM1221)).